Consider the following 250-residue polypeptide: Probable aquaporin TIP-type (250 aa).

Transmembrane regions (helical) follow at residues Ala20–Tyr42 and Gly55–Val77. The short motif at Asn83–Ala85 is the NPA 1 element. The next 3 membrane-spanning stretches (helical) occupy residues Thr97–Leu119, Ile140–Ala162, and Ile172–Gly194. The NPA 2 motif lies at Asn197 to Ala199. The helical transmembrane segment at Trp215 to Ile237 threads the bilayer.

The protein belongs to the MIP/aquaporin (TC 1.A.8) family. TIP (TC 1.A.8.10) subfamily. Expressed in mature seeds and dark-grown seedlings.

Its subcellular location is the vacuole membrane. In terms of biological role, channel protein in tonoplast. These proteins may allow the diffusion of amino acids and/or peptides from the vacuolar compartment to the cytoplasm. The polypeptide is Probable aquaporin TIP-type (DIP) (Antirrhinum majus (Garden snapdragon)).